A 378-amino-acid chain; its full sequence is Erythronate-4-phosphate dehydrogenase (378 aa).

Positions 45 and 66 each coordinate substrate. Asp146 and Thr175 together coordinate NAD(+). Residue Arg208 is part of the active site. Asp232 is a binding site for NAD(+). Glu237 is a catalytic residue. Residue His254 is the Proton donor of the active site. Position 257 (Gly257) interacts with NAD(+). Residue Tyr258 participates in substrate binding.

This sequence belongs to the D-isomer specific 2-hydroxyacid dehydrogenase family. PdxB subfamily. Homodimer.

The protein resides in the cytoplasm. The catalysed reaction is 4-phospho-D-erythronate + NAD(+) = (R)-3-hydroxy-2-oxo-4-phosphooxybutanoate + NADH + H(+). It participates in cofactor biosynthesis; pyridoxine 5'-phosphate biosynthesis; pyridoxine 5'-phosphate from D-erythrose 4-phosphate: step 2/5. Its function is as follows. Catalyzes the oxidation of erythronate-4-phosphate to 3-hydroxy-2-oxo-4-phosphonooxybutanoate. The chain is Erythronate-4-phosphate dehydrogenase from Klebsiella pneumoniae (strain 342).